The chain runs to 472 residues: Glutamate synthase [NADPH] small chain (472 aa).

In terms of domain architecture, 4Fe-4S ferredoxin-type spans 41–72 (QDAAAQAHRCLHCGNPYCEWKCPVHNYIPNWL). [4Fe-4S] cluster contacts are provided by Cys-50, Cys-53, Cys-58, and Cys-62.

[4Fe-4S] cluster is required as a cofactor.

It catalyses the reaction 2 L-glutamate + NADP(+) = L-glutamine + 2-oxoglutarate + NADPH + H(+). It functions in the pathway amino-acid biosynthesis; L-glutamate biosynthesis via GLT pathway; L-glutamate from 2-oxoglutarate and L-glutamine (NADP(+) route): step 1/1. It participates in energy metabolism; nitrogen metabolism. Functionally, catalyzes the conversion of L-glutamine and 2-oxoglutarate into two molecules of L-glutamate. This is Glutamate synthase [NADPH] small chain from Halomonas elongata (strain ATCC 33173 / DSM 2581 / NBRC 15536 / NCIMB 2198 / 1H9).